Consider the following 244-residue polypeptide: Protein A47 (244 aa).

It belongs to the orthopoxvirus A47 protein family.

In Variola virus, this protein is Protein A47.